The primary structure comprises 864 residues: Structure-specific endonuclease subunit SLX4 (864 aa).

Over residues 35 to 54 the composition is skewed to low complexity; sequence SPLSLPSPTSLLDFLSTSTS. Disordered regions lie at residues 35–72, 89–113, 160–193, 288–318, 348–382, 413–432, and 625–771; these read SPLS…GKEV, VVSG…PGNA, KANQ…HIND, GLSD…NPPK, LSDE…EKKN, ANGH…HISN, and KTSN…ETLP. Residues 58-72 are compositionally biased toward basic and acidic residues; it reads ARSDTDGDKTQGKEV. 2 stretches are compositionally biased toward polar residues: residues 160–169 and 289–306; these read KANQTVSLQP and LSDS…SATS. A compositionally biased stretch (basic residues) spans 307 to 317; it reads KPRRVKAKNPP. Positions 659-668 are enriched in polar residues; the sequence is SIPQTATTQV. The segment covering 683-695 has biased composition (low complexity); the sequence is VPVPSRRSTSTSK. Polar residues predominate over residues 743-771; that stretch reads PESFNLPTTPLTIRSGKIPSTGTASETLP.

The protein belongs to the SLX4 family. In terms of assembly, forms a heterodimer with SLX1. Post-translationally, phosphorylated in response to DNA damage.

The protein localises to the nucleus. In terms of biological role, regulatory subunit of the SLX1-SLX4 structure-specific endonuclease that resolves DNA secondary structures generated during DNA repair and recombination. Has endonuclease activity towards branched DNA substrates, introducing single-strand cuts in duplex DNA close to junctions with ss-DNA. The protein is Structure-specific endonuclease subunit SLX4 of Paracoccidioides brasiliensis (strain Pb03).